A 184-amino-acid polypeptide reads, in one-letter code: Peptide deformylase (184 aa).

Positions 99 and 141 each coordinate Fe cation. Residue Glu142 is part of the active site. Residue His145 coordinates Fe cation.

Belongs to the polypeptide deformylase family. Requires Fe(2+) as cofactor.

It carries out the reaction N-terminal N-formyl-L-methionyl-[peptide] + H2O = N-terminal L-methionyl-[peptide] + formate. In terms of biological role, removes the formyl group from the N-terminal Met of newly synthesized proteins. Requires at least a dipeptide for an efficient rate of reaction. N-terminal L-methionine is a prerequisite for activity but the enzyme has broad specificity at other positions. The protein is Peptide deformylase of Chlamydia abortus (strain DSM 27085 / S26/3) (Chlamydophila abortus).